The chain runs to 76 residues: uncharacterized protein (76 aa).

A run of 3 helical transmembrane segments spans residues 1 to 21, 35 to 55, and 56 to 76; these read MTAI…HLQL, CFDI…LLII, and NNKF…NTMI.

Its subcellular location is the cell membrane. This is an uncharacterized protein from Borreliella burgdorferi (strain ATCC 35210 / DSM 4680 / CIP 102532 / B31) (Borrelia burgdorferi).